The primary structure comprises 438 residues: Putative B3 domain-containing protein Os04g0676650 (438 aa).

Positions 1-11 (MADARGSSSSS) are enriched in low complexity. 2 disordered regions span residues 1–30 (MADA…DFVG) and 225–285 (SSSH…MNQN). The span at 12–30 (GDGGGGEGKGGAGHGDFVG) shows a compositional bias: gly residues. Basic and acidic residues predominate over residues 258 to 269 (RRSDMESEKNDD). Residues 272–285 (DQTPVSEPPSMNQN) show a composition bias toward polar residues. The TF-B3 DNA-binding region spans 302 to 404 (LRKELTNSDV…KFVVRGEKAI (103 aa)).

Its subcellular location is the nucleus. This is Putative B3 domain-containing protein Os04g0676650 from Oryza sativa subsp. japonica (Rice).